The primary structure comprises 207 residues: Probable GTP-binding protein EngB (207 aa).

Positions 24–199 (GGYEVAFAGR…RGIVGGWLGL (176 aa)) constitute an EngB-type G domain. GTP contacts are provided by residues 32 to 39 (GRSNAGKS), 59 to 63 (GRTQQ), 77 to 80 (DLPG), 144 to 147 (TKAD), and 178 to 180 (YSG). 2 residues coordinate Mg(2+): S39 and T61.

Belongs to the TRAFAC class TrmE-Era-EngA-EngB-Septin-like GTPase superfamily. EngB GTPase family. Mg(2+) is required as a cofactor.

In terms of biological role, necessary for normal cell division and for the maintenance of normal septation. This chain is Probable GTP-binding protein EngB, found in Xanthomonas campestris pv. campestris (strain 8004).